We begin with the raw amino-acid sequence, 156 residues long: ATP synthase subunit b (156 aa).

A helical transmembrane segment spans residues 4–26 (GATFWGPMISFALFVWFTMKYVW).

The protein belongs to the ATPase B chain family. In terms of assembly, F-type ATPases have 2 components, F(1) - the catalytic core - and F(0) - the membrane proton channel. F(1) has five subunits: alpha(3), beta(3), gamma(1), delta(1), epsilon(1). F(0) has three main subunits: a(1), b(2) and c(10-14). The alpha and beta chains form an alternating ring which encloses part of the gamma chain. F(1) is attached to F(0) by a central stalk formed by the gamma and epsilon chains, while a peripheral stalk is formed by the delta and b chains.

The protein localises to the cell inner membrane. Its function is as follows. F(1)F(0) ATP synthase produces ATP from ADP in the presence of a proton or sodium gradient. F-type ATPases consist of two structural domains, F(1) containing the extramembraneous catalytic core and F(0) containing the membrane proton channel, linked together by a central stalk and a peripheral stalk. During catalysis, ATP synthesis in the catalytic domain of F(1) is coupled via a rotary mechanism of the central stalk subunits to proton translocation. Functionally, component of the F(0) channel, it forms part of the peripheral stalk, linking F(1) to F(0). This chain is ATP synthase subunit b, found in Alkalilimnicola ehrlichii (strain ATCC BAA-1101 / DSM 17681 / MLHE-1).